The chain runs to 154 residues: SsrA-binding protein (154 aa).

It belongs to the SmpB family.

It localises to the cytoplasm. Functionally, required for rescue of stalled ribosomes mediated by trans-translation. Binds to transfer-messenger RNA (tmRNA), required for stable association of tmRNA with ribosomes. tmRNA and SmpB together mimic tRNA shape, replacing the anticodon stem-loop with SmpB. tmRNA is encoded by the ssrA gene; the 2 termini fold to resemble tRNA(Ala) and it encodes a 'tag peptide', a short internal open reading frame. During trans-translation Ala-aminoacylated tmRNA acts like a tRNA, entering the A-site of stalled ribosomes, displacing the stalled mRNA. The ribosome then switches to translate the ORF on the tmRNA; the nascent peptide is terminated with the 'tag peptide' encoded by the tmRNA and targeted for degradation. The ribosome is freed to recommence translation, which seems to be the essential function of trans-translation. This chain is SsrA-binding protein, found in Acetivibrio thermocellus (strain ATCC 27405 / DSM 1237 / JCM 9322 / NBRC 103400 / NCIMB 10682 / NRRL B-4536 / VPI 7372) (Clostridium thermocellum).